Consider the following 157-residue polypeptide: 2-C-methyl-D-erythritol 2,4-cyclodiphosphate synthase (157 aa).

A divalent metal cation contacts are provided by Asp8 and His10. 4-CDP-2-C-methyl-D-erythritol 2-phosphate-binding positions include 8–10 (DVH) and 34–35 (HS). An a divalent metal cation-binding site is contributed by His42. 4-CDP-2-C-methyl-D-erythritol 2-phosphate contacts are provided by residues 56 to 58 (DIG), 61 to 65 (FPDTD), 100 to 106 (AQAPKMA), 132 to 135 (TTTE), Phe139, and Arg142.

The protein belongs to the IspF family. In terms of assembly, homotrimer. A divalent metal cation serves as cofactor.

It catalyses the reaction 4-CDP-2-C-methyl-D-erythritol 2-phosphate = 2-C-methyl-D-erythritol 2,4-cyclic diphosphate + CMP. It functions in the pathway isoprenoid biosynthesis; isopentenyl diphosphate biosynthesis via DXP pathway; isopentenyl diphosphate from 1-deoxy-D-xylulose 5-phosphate: step 4/6. Involved in the biosynthesis of isopentenyl diphosphate (IPP) and dimethylallyl diphosphate (DMAPP), two major building blocks of isoprenoid compounds. Catalyzes the conversion of 4-diphosphocytidyl-2-C-methyl-D-erythritol 2-phosphate (CDP-ME2P) to 2-C-methyl-D-erythritol 2,4-cyclodiphosphate (ME-CPP) with a corresponding release of cytidine 5-monophosphate (CMP). This is 2-C-methyl-D-erythritol 2,4-cyclodiphosphate synthase from Pseudomonas putida (strain ATCC 700007 / DSM 6899 / JCM 31910 / BCRC 17059 / LMG 24140 / F1).